Consider the following 148-residue polypeptide: Snaclec 2 (148 aa).

The N-terminal stretch at 1-23 (MGRFIFVSFGLLVVFLSLSGTEA) is a signal peptide. 3 disulfide bridges follow: cysteine 27-cysteine 38, cysteine 55-cysteine 144, and cysteine 121-cysteine 136. The C-type lectin domain maps to 34 to 145 (YDQNCYKAFE…CSGTHSFVCK (112 aa)).

This sequence belongs to the snaclec family. As to quaternary structure, heterodimer; disulfide-linked. Expressed by the venom gland.

The protein resides in the secreted. Functionally, interferes with one step of hemostasis (modulation of platelet aggregation, or coagulation cascade, for example). The polypeptide is Snaclec 2 (Echis ocellatus (Ocellated saw-scaled viper)).